The sequence spans 62 residues: Protein DsrB (62 aa).

This sequence belongs to the DsrB family.

This is Protein DsrB from Shigella boydii serotype 18 (strain CDC 3083-94 / BS512).